A 96-amino-acid polypeptide reads, in one-letter code: Small ribosomal subunit protein bS6 (96 aa).

It belongs to the bacterial ribosomal protein bS6 family.

Binds together with bS18 to 16S ribosomal RNA. The chain is Small ribosomal subunit protein bS6 (rpsF) from Streptomyces coelicolor (strain ATCC BAA-471 / A3(2) / M145).